The following is a 71-amino-acid chain: Disintegrin ussuristatin-2 (71 aa).

The Disintegrin domain maps to 1-71 (EAGEECDCGA…QSADCPRNGF (71 aa)). 6 cysteine pairs are disulfide-bonded: cysteine 6–cysteine 21, cysteine 8–cysteine 16, cysteine 15–cysteine 38, cysteine 29–cysteine 35, cysteine 34–cysteine 59, and cysteine 47–cysteine 66. A Cell attachment site; atypical (KGD) motif is present at residues 51 to 53 (KGD).

Belongs to the venom metalloproteinase (M12B) family. P-II subfamily. P-IId sub-subfamily. In terms of assembly, homodimer. Expressed by the venom gland.

It is found in the secreted. In terms of biological role, suppress platelet aggregation induced by ADP, collagen, thrombin, and epinephrine (IC(50)=170-330 nM). Also dose-dependently inhibits the adhesion of human melanoma cells to fibrinogen but not to fibronectin. This chain is Disintegrin ussuristatin-2, found in Gloydius ussuriensis (Ussuri mamushi).